We begin with the raw amino-acid sequence, 322 residues long: tRNA-dihydrouridine synthase B (322 aa).

Residues 16 to 18 and Gln-70 each bind FMN; that span reads PMA. Cys-100 acts as the Proton donor in catalysis. Residues Lys-139, 200–202, and 224–225 each bind FMN; these read NGD and GR.

Belongs to the Dus family. DusB subfamily. FMN is required as a cofactor.

It catalyses the reaction a 5,6-dihydrouridine in tRNA + NAD(+) = a uridine in tRNA + NADH + H(+). The enzyme catalyses a 5,6-dihydrouridine in tRNA + NADP(+) = a uridine in tRNA + NADPH + H(+). In terms of biological role, catalyzes the synthesis of 5,6-dihydrouridine (D), a modified base found in the D-loop of most tRNAs, via the reduction of the C5-C6 double bond in target uridines. The sequence is that of tRNA-dihydrouridine synthase B from Vibrio vulnificus (strain CMCP6).